Consider the following 245-residue polypeptide: Ribosomal RNA large subunit methyltransferase E (245 aa).

S-adenosyl-L-methionine-binding residues include Gly-58, Trp-60, Asp-78, Asp-96, and Asp-123. Lys-163 serves as the catalytic Proton acceptor.

This sequence belongs to the class I-like SAM-binding methyltransferase superfamily. RNA methyltransferase RlmE family.

It is found in the cytoplasm. The enzyme catalyses uridine(2552) in 23S rRNA + S-adenosyl-L-methionine = 2'-O-methyluridine(2552) in 23S rRNA + S-adenosyl-L-homocysteine + H(+). Its function is as follows. Specifically methylates the uridine in position 2552 of 23S rRNA at the 2'-O position of the ribose in the fully assembled 50S ribosomal subunit. This Methanocaldococcus jannaschii (strain ATCC 43067 / DSM 2661 / JAL-1 / JCM 10045 / NBRC 100440) (Methanococcus jannaschii) protein is Ribosomal RNA large subunit methyltransferase E.